Here is a 102-residue protein sequence, read N- to C-terminus: Large ribosomal subunit protein bL21 (102 aa).

It belongs to the bacterial ribosomal protein bL21 family. Part of the 50S ribosomal subunit. Contacts protein L20.

This protein binds to 23S rRNA in the presence of protein L20. The chain is Large ribosomal subunit protein bL21 from Clavibacter sepedonicus (Clavibacter michiganensis subsp. sepedonicus).